The sequence spans 474 residues: 3-isopropylmalate dehydratase large subunit (474 aa).

Positions 355, 415, and 418 each coordinate [4Fe-4S] cluster.

The protein belongs to the aconitase/IPM isomerase family. LeuC type 1 subfamily. In terms of assembly, heterodimer of LeuC and LeuD. The cofactor is [4Fe-4S] cluster.

The catalysed reaction is (2R,3S)-3-isopropylmalate = (2S)-2-isopropylmalate. Its pathway is amino-acid biosynthesis; L-leucine biosynthesis; L-leucine from 3-methyl-2-oxobutanoate: step 2/4. Functionally, catalyzes the isomerization between 2-isopropylmalate and 3-isopropylmalate, via the formation of 2-isopropylmaleate. The sequence is that of 3-isopropylmalate dehydratase large subunit from Shewanella putrefaciens (strain CN-32 / ATCC BAA-453).